Here is a 154-residue protein sequence, read N- to C-terminus: Small heat shock protein C2 (154 aa).

Positions 43–154 (STEKNLIPRT…GKTRKIEVKG (112 aa)) constitute a sHSP domain.

The protein belongs to the small heat shock protein (HSP20) family.

This Rickettsia felis (strain ATCC VR-1525 / URRWXCal2) (Rickettsia azadi) protein is Small heat shock protein C2 (hspC2).